We begin with the raw amino-acid sequence, 344 residues long: Inositol 2-dehydrogenase/D-chiro-inositol 3-dehydrogenase (344 aa).

Belongs to the Gfo/Idh/MocA family. As to quaternary structure, homotetramer.

It catalyses the reaction myo-inositol + NAD(+) = scyllo-inosose + NADH + H(+). The catalysed reaction is 1D-chiro-inositol + NAD(+) = scyllo-inosine + NADH + H(+). The protein operates within polyol metabolism; myo-inositol degradation into acetyl-CoA; acetyl-CoA from myo-inositol: step 1/7. In terms of biological role, involved in the oxidation of myo-inositol (MI) and D-chiro-inositol (DCI) to 2-keto-myo-inositol (2KMI or 2-inosose) and 1-keto-D-chiro-inositol (1KDCI), respectively. The sequence is that of Inositol 2-dehydrogenase/D-chiro-inositol 3-dehydrogenase from Bacillus velezensis (strain DSM 23117 / BGSC 10A6 / LMG 26770 / FZB42) (Bacillus amyloliquefaciens subsp. plantarum).